A 1337-amino-acid chain; its full sequence is Nucleoporin POM152 (1337 aa).

The segment at 1 to 48 is disordered; the sequence is MEHRYNVFNDTPRGNHWMGSSVSGSPRPSYSSRPNVNTTRRFQYSDDE. Residues 1-110 are Cytoplasmic-facing; the sequence is MEHRYNVFND…TDVLEISKQR (110 aa). Residues 1 to 175 are pore side; sequence MEHRYNVFND…SFNIPRLTFK (175 aa). Over residues 19-37 the composition is skewed to low complexity; sequence GSSVSGSPRPSYSSRPNVN. Phosphoserine is present on residues Ser-45 and Ser-60. A helical transmembrane segment spans residues 111–131; the sequence is TFAVILFLIIQCYKIYDLVIL. The Perinuclear space segment spans residues 132–148; that stretch reads KSGLPLSGLLFKNYRFN. The helical transmembrane segment at 149–169 threads the bilayer; the sequence is FISKYFIIDSFFLYVLPSFNI. Residues 170 to 172 are Cytoplasmic-facing; sequence PRL. A helical membrane pass occupies residues 173–193; sequence TFKPWVVYLQILAMLLLNIFI. Residues 194-1337 are Perinuclear space-facing; it reads SSDHEFVLIS…FAKNDLFFNN (1144 aa). Residues 196-1337 are cisternal side; it reads DHEFVLISLI…FAKNDLFFNN (1142 aa). Residue Asn-280 is glycosylated (N-linked (GlcNAc...) asparagine). A run of 8 repeats spans residues 390 to 413, 626 to 650, 732 to 755, 836 to 859, 943 to 966, 1058 to 1077, 1157 to 1178, and 1253 to 1276. The tract at residues 390-1276 is 8 X 24 AA approximate repeats; the sequence is DRCIGDSDNV…EGTPPFSLTY (887 aa).

As to quaternary structure, component of the nuclear pore complex (NPC). NPC constitutes the exclusive means of nucleocytoplasmic transport. NPCs allow the passive diffusion of ions and small molecules and the active, nuclear transport receptor-mediated bidirectional transport of macromolecules such as proteins, RNAs, ribonucleoparticles (RNPs), and ribosomal subunits across the nuclear envelope. Due to its 8-fold rotational symmetry, all subunits are present with 8 copies or multiples thereof. Interacts with NUP188. The N-terminus is blocked. Post-translationally, phosphorylated by CDC28.

The protein resides in the nucleus. It is found in the nuclear pore complex. Its subcellular location is the nucleus membrane. Functionally, functions as a component of the nuclear pore complex (NPC). NPC components, collectively referred to as nucleoporins (NUPs), can play the role of both NPC structural components and of docking or interaction partners for transiently associated nuclear transport factors. POM152 is important for the de novo assembly of NPCs. This Saccharomyces cerevisiae (strain ATCC 204508 / S288c) (Baker's yeast) protein is Nucleoporin POM152 (POM152).